Consider the following 86-residue polypeptide: MTRTSKWTVHEAKSNPKYFTHNGNFGESPNHVKRGGYGKGNWGKPGDEINDLIDSGEIKTVFNKTRRGSNSQNNERRLSDLQQYHI.

Residues Ser28 and Ser79 each carry the phosphoserine modification. The segment at 63–86 (NKTRRGSNSQNNERRLSDLQQYHI) is disordered.

Belongs to the STF2 family. Associates with ribosomes.

It localises to the cytoplasm. The protein localises to the nucleus. Its function is as follows. May be involved in inhibition of the reverse ATPase reaction of mitochondrial F(1)F(0)-type ATP synthase. This chain is Translation machinery-associated protein 10, found in Saccharomyces cerevisiae (strain ATCC 204508 / S288c) (Baker's yeast).